A 111-amino-acid chain; its full sequence is Large ribosomal subunit protein uL23 (111 aa).

This sequence belongs to the universal ribosomal protein uL23 family. Part of the 50S ribosomal subunit. Contacts protein L29, and trigger factor when it is bound to the ribosome.

Its function is as follows. One of the early assembly proteins it binds 23S rRNA. One of the proteins that surrounds the polypeptide exit tunnel on the outside of the ribosome. Forms the main docking site for trigger factor binding to the ribosome. The chain is Large ribosomal subunit protein uL23 from Nitrosospira multiformis (strain ATCC 25196 / NCIMB 11849 / C 71).